Consider the following 188-residue polypeptide: Segregation and condensation protein B (188 aa).

This sequence belongs to the ScpB family. Homodimer. Homodimerization may be required to stabilize the binding of ScpA to the Smc head domains. Component of a cohesin-like complex composed of ScpA, ScpB and the Smc homodimer, in which ScpA and ScpB bind to the head domain of Smc. The presence of the three proteins is required for the association of the complex with DNA.

It is found in the cytoplasm. Functionally, participates in chromosomal partition during cell division. May act via the formation of a condensin-like complex containing Smc and ScpA that pull DNA away from mid-cell into both cell halves. The sequence is that of Segregation and condensation protein B from Lactococcus lactis subsp. cremoris (strain MG1363).